The following is a 119-amino-acid chain: NADH-quinone oxidoreductase subunit A (119 aa).

The next 3 helical transmembrane spans lie at 7–27 (FPVL…VSIG), 63–83 (LVAI…PWGV), and 88–108 (IGWP…LGFA).

This sequence belongs to the complex I subunit 3 family. In terms of assembly, NDH-1 is composed of 14 different subunits. Subunits NuoA, H, J, K, L, M, N constitute the membrane sector of the complex.

The protein localises to the cell inner membrane. The enzyme catalyses a quinone + NADH + 5 H(+)(in) = a quinol + NAD(+) + 4 H(+)(out). NDH-1 shuttles electrons from NADH, via FMN and iron-sulfur (Fe-S) centers, to quinones in the respiratory chain. The immediate electron acceptor for the enzyme in this species is believed to be ubiquinone. Couples the redox reaction to proton translocation (for every two electrons transferred, four hydrogen ions are translocated across the cytoplasmic membrane), and thus conserves the redox energy in a proton gradient. The polypeptide is NADH-quinone oxidoreductase subunit A (Paraburkholderia xenovorans (strain LB400)).